The primary structure comprises 171 residues: Neuronal vesicle trafficking-associated protein 2 (171 aa).

Residues 1-21 form a disordered region; sequence MVKLNGNPGEKGAKPPSVEDG. Residues 1–71 are Cytoplasmic-facing; it reads MVKLNGNPGE…FRVPKIAEFT (71 aa). The helical; Signal-anchor for type II membrane protein transmembrane segment at 72 to 92 threads the bilayer; sequence VTILVSLALAFLACIVFLVVY. Residues 93-171 lie on the Lumenal side of the membrane; sequence KAFTYDHSCP…EPKPPKTQGH (79 aa).

This sequence belongs to the NSG family.

The protein localises to the membrane. It is found in the golgi apparatus. It localises to the trans-Golgi network membrane. The protein resides in the cell projection. Its subcellular location is the dendrite. The protein localises to the endosome membrane. It is found in the early endosome membrane. It localises to the late endosome membrane. The protein resides in the lysosome lumen. Its subcellular location is the cytoplasmic vesicle membrane. The protein localises to the golgi stack membrane. It is found in the endosome. It localises to the multivesicular body membrane. The chain is Neuronal vesicle trafficking-associated protein 2 from Rattus norvegicus (Rat).